A 122-amino-acid chain; its full sequence is UPF0344 protein BPUM_1008 (122 aa).

The next 4 membrane-spanning stretches (helical) occupy residues 5 to 25, 33 to 53, 60 to 80, and 93 to 113; these read LHIT…ALAG, IVHM…VELY, IPGF…VIGF, and SVTG…LLGL.

This sequence belongs to the UPF0344 family.

It localises to the cell membrane. The chain is UPF0344 protein BPUM_1008 from Bacillus pumilus (strain SAFR-032).